The sequence spans 264 residues: U1 snRNP-associated protein usp106 (264 aa).

A coiled-coil region spans residues 83–126; the sequence is DYLEDLERHVDDCNKRIDIAEARREKTKEEEERIDELMRDIIHT. Residues 233-258 are compositionally biased toward basic and acidic residues; sequence EDREKSRDKKDGEKQRDNLASFEDKI. The interval 233 to 264 is disordered; sequence EDREKSRDKKDGEKQRDNLASFEDKISTSFVA.

The protein belongs to the Luc7 family. As to quaternary structure, component of the U1 snRNP particle, a subcomplex of the spliceosome.

The protein localises to the cytoplasm. Its subcellular location is the nucleus. Component of the U1 snRNP particle, which recognizes and binds the 5'-splice site of pre-mRNA. Together with other non-snRNP factors, U1 snRNP forms the spliceosomal commitment complex, that targets pre-mRNA to the splicing pathway. The protein is U1 snRNP-associated protein usp106 (usp106) of Schizosaccharomyces pombe (strain 972 / ATCC 24843) (Fission yeast).